A 591-amino-acid chain; its full sequence is Cineole synthase 1, chloroplastic (591 aa).

Residues 1-44 (MSSLIMQVVIPKPAKFFHNNLFSLSSKRHRFSTTTTTRGGRWAR) constitute a chloroplast transit peptide. The (2E)-geranyl diphosphate site is built by arginine 308, aspartate 345, aspartate 349, arginine 486, and aspartate 489. Residues aspartate 345 and aspartate 349 each coordinate Mg(2+). A DDXXD motif motif is present at residues 345 to 349 (DDVFD). 3 residues coordinate Mg(2+): aspartate 489, threonine 493, and glutamate 497.

Belongs to the terpene synthase family. Tpsb subfamily. Monomer. Mg(2+) serves as cofactor. It depends on Mn(2+) as a cofactor.

The protein localises to the plastid. It is found in the chloroplast. The enzyme catalyses (2E)-geranyl diphosphate + H2O = 1,8-cineole + diphosphate. The catalysed reaction is (2E)-geranyl diphosphate = alpha-pinene + diphosphate. It carries out the reaction (2E)-geranyl diphosphate = beta-pinene + diphosphate. It catalyses the reaction (2E)-geranyl diphosphate + H2O = (S)-alpha-terpineol + diphosphate. The enzyme catalyses (2E)-geranyl diphosphate = beta-myrcene + diphosphate. The catalysed reaction is (2E)-geranyl diphosphate = sabinene + diphosphate. It participates in secondary metabolite biosynthesis; terpenoid biosynthesis. Functionally, monoterpene synthase (TPS) involved in the biosynthesis of monoterpene natural products, components of the chemical defense arsenal. Catalyzes the conversion of (2E)-geranyl diphosphate (GPP) into 1,8-cineole, and, as minor products, alpha-terpineol, beta-pinene, alpha-pinene, sabinene and myrcene. In Salvia fruticosa (Greek sage), this protein is Cineole synthase 1, chloroplastic.